We begin with the raw amino-acid sequence, 228 residues long: MYSIVAEESGLLPRERLLQKGAEVLSDQELLAIVLRTGTKSESVLSMANRILKGMTSLADLSRLSLNELQEIPGIGRVKSIELKAMVELAKRIEKAELARSEQIMSSQQVARRMMLDIGDKPQEHLVAIYLDTQNRIIQQKTVFIGGVRRSIAEPREILYYACHLMATSLIVVHNHPSGEAYPSRNDIDFTQKIKRSCDDLGICLLDHLIVGKSTYYSFREEREDFEL.

In terms of domain architecture, MPN spans 103-225; it reads QIMSSQQVAR…YYSFREERED (123 aa). The Zn(2+) site is built by His-174, His-176, and Asp-187. The JAMM motif signature appears at 174 to 187; the sequence is HNHPSGEAYPSRND.

Belongs to the UPF0758 family.

The polypeptide is UPF0758 protein str1465 (Streptococcus thermophilus (strain CNRZ 1066)).